The chain runs to 39 residues: Conotoxin ArMSGL-013 (39 aa).

A propeptide spanning residues 1-5 is cleaved from the precursor; it reads RRSLT. Intrachain disulfides connect Cys12/Cys24, Cys16/Cys33, and Cys23/Cys37. Trp38 carries the post-translational modification Tryptophan amide.

Belongs to the conotoxin O3 superfamily. In terms of tissue distribution, expressed by the venom duct.

The protein localises to the secreted. The chain is Conotoxin ArMSGL-013 from Conus arenatus (Sand-dusted cone).